A 491-amino-acid polypeptide reads, in one-letter code: Probable glycine dehydrogenase (decarboxylating) subunit 2 (491 aa).

At Lys-273 the chain carries N6-(pyridoxal phosphate)lysine.

This sequence belongs to the GcvP family. C-terminal subunit subfamily. In terms of assembly, the glycine cleavage system is composed of four proteins: P, T, L and H. In this organism, the P 'protein' is a heterodimer of two subunits. It depends on pyridoxal 5'-phosphate as a cofactor.

The catalysed reaction is N(6)-[(R)-lipoyl]-L-lysyl-[glycine-cleavage complex H protein] + glycine + H(+) = N(6)-[(R)-S(8)-aminomethyldihydrolipoyl]-L-lysyl-[glycine-cleavage complex H protein] + CO2. Functionally, the glycine cleavage system catalyzes the degradation of glycine. The P protein binds the alpha-amino group of glycine through its pyridoxal phosphate cofactor; CO(2) is released and the remaining methylamine moiety is then transferred to the lipoamide cofactor of the H protein. The polypeptide is Probable glycine dehydrogenase (decarboxylating) subunit 2 (Bacillus cereus (strain AH187)).